Consider the following 89-residue polypeptide: MPAPRYKSGSAKKVYKRAPGNRRVLHIRRKKQSSAKCGACGALLNGVPSLRTVQVSKLSKTQRRPERAFGGALCPKCVKKMMVVKARNY.

It belongs to the eukaryotic ribosomal protein eL34 family.

This chain is Large ribosomal subunit protein eL34, found in Methanococcus vannielii (strain ATCC 35089 / DSM 1224 / JCM 13029 / OCM 148 / SB).